The primary structure comprises 253 residues: Imidazole glycerol phosphate synthase subunit HisF (253 aa).

Active-site residues include aspartate 11 and aspartate 130.

The protein belongs to the HisA/HisF family. Heterodimer of HisH and HisF.

It is found in the cytoplasm. It catalyses the reaction 5-[(5-phospho-1-deoxy-D-ribulos-1-ylimino)methylamino]-1-(5-phospho-beta-D-ribosyl)imidazole-4-carboxamide + L-glutamine = D-erythro-1-(imidazol-4-yl)glycerol 3-phosphate + 5-amino-1-(5-phospho-beta-D-ribosyl)imidazole-4-carboxamide + L-glutamate + H(+). It participates in amino-acid biosynthesis; L-histidine biosynthesis; L-histidine from 5-phospho-alpha-D-ribose 1-diphosphate: step 5/9. IGPS catalyzes the conversion of PRFAR and glutamine to IGP, AICAR and glutamate. The HisF subunit catalyzes the cyclization activity that produces IGP and AICAR from PRFAR using the ammonia provided by the HisH subunit. This is Imidazole glycerol phosphate synthase subunit HisF from Dehalococcoides mccartyi (strain ATCC BAA-2100 / JCM 16839 / KCTC 5957 / BAV1).